The chain runs to 1443 residues: ARF guanine-nucleotide exchange factor GNL1 (1443 aa).

The SEC7 domain maps to 554-743 (FVRKVKHIKK…SEIYHSIRHS (190 aa)). E658 is a catalytic residue. Disordered stretches follow at residues 917 to 949 (DDPELSTSNLEQEKPSANPVPVVSQSQPSAMPR) and 1424 to 1443 (DQFQRRNAKPEDPPVPGNEV). Positions 939–949 (VSQSQPSAMPR) are enriched in polar residues. Residues 1425–1435 (QFQRRNAKPED) are compositionally biased toward basic and acidic residues.

As to quaternary structure, homodimer.

It localises to the cytoplasm. Its subcellular location is the cytosol. The protein resides in the golgi apparatus membrane. Activates the ARF proteins by exchanging bound GDP for free GTP. Plays a role in vesicular protein sorting. Acts as the major regulator of retrograde Golgi to endoplasmic reticulum trafficking but is also involved in the endocytosis process. Could function redundantly with GNOM. Regulates vesicle trafficking required for the coordinated polar localization of auxin efflux carriers which in turn determines the direction of auxin flow. Mediates the endocytosis of PIN2 from plasma membrane to endosomal compartments. Required for maintenance of endoplasmic reticulum morphology. In Arabidopsis thaliana (Mouse-ear cress), this protein is ARF guanine-nucleotide exchange factor GNL1 (GNL1).